The primary structure comprises 507 residues: Fumarate hydratase, mitochondrial (507 aa).

Residues 1–41 (MNRAFCLLARSRRFPRVPSAGAVLSGEAATLPRCAPNVVRM) constitute a mitochondrion transit peptide. 3 positions are modified to N6-acetyllysine; alternate: lysine 58, lysine 63, and lysine 77. An N6-succinyllysine; alternate mark is found at lysine 58, lysine 63, and lysine 77. Threonine 82 bears the Phosphothreonine mark. Lysine 91 carries the N6-acetyllysine modification. Lysine 112 and lysine 119 each carry N6-acetyllysine; alternate. An N6-succinyllysine; alternate mark is found at lysine 112 and lysine 119. Substrate is bound by residues 142–144 (SGT), 173–176 (HPND), and 183–185 (SSN). Lysine 210 is modified (N6-acetyllysine). Lysine 220 carries the N6-acetyllysine; alternate modification. Lysine 220 bears the N6-succinyllysine; alternate mark. Threonine 231 contributes to the substrate binding site. Histidine 232 serves as the catalytic Proton donor/acceptor. Phosphothreonine is present on threonine 233. Residue lysine 289 is modified to N6-acetyllysine; alternate. N6-succinyllysine; alternate is present on lysine 289. Residue serine 362 is part of the active site. Substrate is bound by residues serine 363 and 368-370 (KVN). Phosphoserine is present on serine 363. An N6-succinyllysine mark is found at lysine 464 and lysine 470. Lysine 499 is modified (N6-acetyllysine).

The protein belongs to the class-II fumarase/aspartase family. Fumarase subfamily. Homotetramer. Interacts with H2AZ1. Phosphorylation at Thr-233 by PRKDC in response to DNA damage promotes translocation to the nucleus and recruitment to DNA double-strand breaks (DSBs).

The protein localises to the mitochondrion. It localises to the cytoplasm. Its subcellular location is the cytosol. The protein resides in the nucleus. It is found in the chromosome. The enzyme catalyses (S)-malate = fumarate + H2O. It functions in the pathway carbohydrate metabolism; tricarboxylic acid cycle; (S)-malate from fumarate: step 1/1. In terms of biological role, catalyzes the reversible stereospecific interconversion of fumarate to L-malate. Experiments in other species have demonstrated that specific isoforms of this protein act in defined pathways and favor one direction over the other. Its function is as follows. Catalyzes the hydration of fumarate to L-malate in the tricarboxylic acid (TCA) cycle to facilitate a transition step in the production of energy in the form of NADH. Catalyzes the dehydration of L-malate to fumarate. Fumarate metabolism in the cytosol plays a role during urea cycle and arginine metabolism; fumarate being a by-product of the urea cycle and amino-acid catabolism. Also plays a role in DNA repair by promoting non-homologous end-joining (NHEJ). In response to DNA damage and phosphorylation by PRKDC, translocates to the nucleus and accumulates at DNA double-strand breaks (DSBs): acts by catalyzing formation of fumarate, an inhibitor of KDM2B histone demethylase activity, resulting in enhanced dimethylation of histone H3 'Lys-36' (H3K36me2). The polypeptide is Fumarate hydratase, mitochondrial (Rattus norvegicus (Rat)).